A 387-amino-acid polypeptide reads, in one-letter code: Chaperone protein DnaJ (387 aa).

The J domain occupies 5–70 (DYYEVLGLQK…DKKAKYDQFG (66 aa)). The segment at 144-226 (GCEKEISITR…CKGKGTVRKN (83 aa)) adopts a CR-type zinc-finger fold. Zn(2+) is bound by residues C157, C160, C174, C177, C200, C203, C214, and C217. CXXCXGXG motif repeat units follow at residues 157–164 (CETCHGTG), 174–181 (CPKCNGSG), 200–207 (CDQCGGTG), and 214–221 (CPDCKGKG).

This sequence belongs to the DnaJ family. As to quaternary structure, homodimer. Zn(2+) is required as a cofactor.

The protein localises to the cytoplasm. In terms of biological role, participates actively in the response to hyperosmotic and heat shock by preventing the aggregation of stress-denatured proteins and by disaggregating proteins, also in an autonomous, DnaK-independent fashion. Unfolded proteins bind initially to DnaJ; upon interaction with the DnaJ-bound protein, DnaK hydrolyzes its bound ATP, resulting in the formation of a stable complex. GrpE releases ADP from DnaK; ATP binding to DnaK triggers the release of the substrate protein, thus completing the reaction cycle. Several rounds of ATP-dependent interactions between DnaJ, DnaK and GrpE are required for fully efficient folding. Also involved, together with DnaK and GrpE, in the DNA replication of plasmids through activation of initiation proteins. The sequence is that of Chaperone protein DnaJ from Clostridium perfringens (strain 13 / Type A).